Reading from the N-terminus, the 292-residue chain is Acetylglutamate kinase (292 aa).

Substrate is bound by residues Gly64–Gly65, Arg86, and Asn190.

The protein belongs to the acetylglutamate kinase family. ArgB subfamily.

The protein resides in the cytoplasm. The catalysed reaction is N-acetyl-L-glutamate + ATP = N-acetyl-L-glutamyl 5-phosphate + ADP. Its pathway is amino-acid biosynthesis; L-arginine biosynthesis; N(2)-acetyl-L-ornithine from L-glutamate: step 2/4. Its function is as follows. Catalyzes the ATP-dependent phosphorylation of N-acetyl-L-glutamate. The sequence is that of Acetylglutamate kinase from Geobacter sulfurreducens (strain ATCC 51573 / DSM 12127 / PCA).